A 119-amino-acid polypeptide reads, in one-letter code: Aspartate 1-decarboxylase (119 aa).

Ser25 functions as the Schiff-base intermediate with substrate; via pyruvic acid in the catalytic mechanism. Ser25 bears the Pyruvic acid (Ser) mark. Thr57 provides a ligand contact to substrate. The active-site Proton donor is Tyr58. 73–75 (GAA) is a substrate binding site.

The protein belongs to the PanD family. As to quaternary structure, heterooctamer of four alpha and four beta subunits. The cofactor is pyruvate. Post-translationally, is synthesized initially as an inactive proenzyme, which is activated by self-cleavage at a specific serine bond to produce a beta-subunit with a hydroxyl group at its C-terminus and an alpha-subunit with a pyruvoyl group at its N-terminus.

It localises to the cytoplasm. It catalyses the reaction L-aspartate + H(+) = beta-alanine + CO2. It participates in cofactor biosynthesis; (R)-pantothenate biosynthesis; beta-alanine from L-aspartate: step 1/1. Its function is as follows. Catalyzes the pyruvoyl-dependent decarboxylation of aspartate to produce beta-alanine. The polypeptide is Aspartate 1-decarboxylase (Herminiimonas arsenicoxydans).